Here is a 122-residue protein sequence, read N- to C-terminus: Large ribosomal subunit protein uL14 (122 aa).

The protein belongs to the universal ribosomal protein uL14 family. Part of the 50S ribosomal subunit. Forms a cluster with proteins L3 and L19. In the 70S ribosome, L14 and L19 interact and together make contacts with the 16S rRNA in bridges B5 and B8.

Its function is as follows. Binds to 23S rRNA. Forms part of two intersubunit bridges in the 70S ribosome. In Bartonella quintana (strain Toulouse) (Rochalimaea quintana), this protein is Large ribosomal subunit protein uL14.